Here is a 435-residue protein sequence, read N- to C-terminus: C4-dicarboxylate transport protein (435 aa).

9 helical membrane-spanning segments follow: residues 4–24, 44–64, 76–96, 142–162, 184–204, 222–242, 289–309, 326–346, and 352–372; these read SLFK…ILLG, LIKM…IAGM, VALL…LIIV, IGAF…LFGF, VIFG…FGAM, LIIC…GTIA, VVGL…SIYL, IFHQ…VAGV, and IVLA…LALI.

This sequence belongs to the dicarboxylate/amino acid:cation symporter (DAACS) (TC 2.A.23) family.

It is found in the cell inner membrane. Its function is as follows. Responsible for the transport of dicarboxylates such as succinate, fumarate, and malate from the periplasm across the membrane. The protein is C4-dicarboxylate transport protein of Salmonella paratyphi A (strain ATCC 9150 / SARB42).